The chain runs to 441 residues: Plasmepsin VI (441 aa).

The Cytoplasmic portion of the chain corresponds to 1-7 (MTNFCIK). Residues 8–28 (SYLFLYLSFLLFFDIITIFHV) traverse the membrane as a helical; Signal-anchor for type II membrane protein segment. Residues 29–441 (SSIRISTVLK…VGVVKSNHNF (413 aa)) are Extracellular-facing. A Peptidase A1 domain is found at 109–435 (FIGDIEIGNP…DNDHKLVGVV (327 aa)). Active-site residues include Asp127 and Asp324.

The protein belongs to the peptidase A1 family.

It is found in the membrane. Its function is as follows. During the development in the mosquito midgut, plays a role in sporozoite egress from oocysts. The chain is Plasmepsin VI from Plasmodium berghei (strain Anka).